A 401-amino-acid chain; its full sequence is cAMP-dependent protein kinase type II-alpha regulatory subunit (401 aa).

The residue at position 2 (serine 2) is an N-acetylserine. Positions 2–135 (SHIQIPPGLT…RLQEACKDIL (134 aa)) are dimerization and phosphorylation. Serine 47, serine 74, serine 76, and serine 96 each carry phosphoserine. The disordered stretch occupies residues 61–83 (ESSAVPVIEEDGESDSDSEDADL). Residues 68-83 (IEEDGESDSDSEDADL) show a composition bias toward acidic residues. 3',5'-cyclic AMP-binding positions include 136 to 257 (LFKN…ESVP), glutamate 205, arginine 214, 258 to 401 (LFKS…DPGQ), glutamate 335, and arginine 344. Threonine 212 is modified (phosphothreonine; by PDPK1). Phosphoserine occurs at positions 347 and 392.

Belongs to the cAMP-dependent kinase regulatory chain family. The inactive form of the enzyme is composed of two regulatory chains and two catalytic chains. Activation by cAMP produces two active catalytic monomers and a regulatory dimer that binds four cAMP molecules. Interacts with AKAP4. Interacts with CBFA2T3. Interacts with the phosphorylated form of PJA2. Interacts with MYRIP. This interaction may link PKA to components of the exocytosis machinery, thus facilitating exocytosis, including insulin release. Forms a complex composed of PRKAR2A, GSK3B and GSKIP through GSKIP interaction; facilitates PKA-induced phosphorylation and regulates GSK3B activity. Interacts with ADCY8; inhibits adenylate cyclase activity through PKA phosphorylation. In terms of processing, phosphorylated by the activated catalytic chain. As to expression, four types of regulatory chains are found: I-alpha, I-beta, II-alpha, and II-beta. Their expression varies among tissues and is in some cases constitutive and in others inducible.

It is found in the cytoplasm. The protein localises to the cell membrane. Regulatory subunit of the cAMP-dependent protein kinases involved in cAMP signaling in cells. Type II regulatory chains mediate membrane association by binding to anchoring proteins, including the MAP2 kinase. In Mus musculus (Mouse), this protein is cAMP-dependent protein kinase type II-alpha regulatory subunit (Prkar2a).